Here is an 813-residue protein sequence, read N- to C-terminus: MNEYNFSDIEKSTQEYWRKNDTFKTIEDNTKEKFYCLSMLPYPSGTLHMGHVRNYTIGDVIARYQKMQGKNVLHPMGWDAFGLPAENAAIKHKKSPYEWTKSNIAYMRSQFDSLGFSFDWSREIATCDEDYYKWEQWFFIQLYKKGLAYRKNSVVNWDPVDQTVLANEQVVDGRGWRSGALVEKKEIPQWFLKITDYADELLQDINKLDNWPEAVKTMQINWIGKSKGLTVKFKVKDSNQEIEVFTTRPDTLMGVNYLGIAPEHPLALKEAKSNSQLAAFIEECKKTSTMEADLATQEKKGFKTSIKVIHPISAETIDVWVANFVLMGYGSGAVMSVPAHDQRDWEFAQKYNIPLKQVIESNDNKLKIDLEKQAFTEKGILINSGEFDGLNFKNAYQAIKKYLTKQNKGYETTNFRIHDWGISRQRYWGCPIPMIHCDDCGAVPEKEENLPVRLPTDVALTEAGSPLKDIPEFINVACPECGKPAKRETDTFDTFFESSWYYARYTCPTSNQMLDQEANYWLPVDKYIGGIEHAIMHLLYARFFHKLMRDQGLVKSDEPFKNLLTQGMVLKDGAKMSKSKGNIVDPQELIDKYGADTVRLFSMFAASPEQSLEWSETGVEGANKFLRKVFNYAELNKVIFAKNITLESQKLTKEDKKARFEIHSNLKQAIFDFDKSQFNTVVSACMKILNTLNNYDNLSESVKVEGFSILLRILAPFTPHLCHYLWQQLNLGEDILHTSFPTVDNNALEKDEFLLVVQINGKLKAKLELDASLSSNQVEEVVLADEHVKSFIDNKQVVKVIYVPQKLINIVIK.

The short motif at 41 to 51 is the 'HIGH' region element; it reads PYPSGTLHMGH. The 'KMSKS' region signature appears at 575–579; that stretch reads KMSKS. Residue K578 participates in ATP binding.

The protein belongs to the class-I aminoacyl-tRNA synthetase family.

The protein localises to the cytoplasm. The enzyme catalyses tRNA(Leu) + L-leucine + ATP = L-leucyl-tRNA(Leu) + AMP + diphosphate. This Francisella tularensis subsp. holarctica (strain FTNF002-00 / FTA) protein is Leucine--tRNA ligase.